The primary structure comprises 1024 residues: Integrator complex subunit 7 homolog (1024 aa).

Polar residues-rich tracts occupy residues 1-11 and 19-36; these read MSKYKNSSLLN and PSLS…QLPP. Disordered regions lie at residues 1-109, 472-502, and 842-863; these read MSKY…PTNS, DNNN…NNNN, and NNNN…NNNN. Composition is skewed to low complexity over residues 44 to 77, 85 to 96, and 473 to 502; these read STNN…NNTV, TAGSSTSSASSV, and NNNN…NNNN.

The protein belongs to the Integrator subunit 7 family. As to quaternary structure, component of the Integrator complex. The core complex associates with protein phosphatase 2A subunits, to form the Integrator-PP2A (INTAC) complex.

Its subcellular location is the nucleus. It localises to the chromosome. The protein resides in the cytoplasm. Functionally, component of the integrator complex, a multiprotein complex that terminates RNA polymerase II (Pol II) transcription in the promoter-proximal region of genes. The integrator complex provides a quality checkpoint during transcription elongation by driving premature transcription termination of transcripts that are unfavorably configured for transcriptional elongation: the complex terminates transcription by (1) catalyzing dephosphorylation of the C-terminal domain (CTD) of Pol II subunit polr2a, (2) degrading the exiting nascent RNA transcript via endonuclease activity and (3) promoting the release of Pol II from bound DNA. The integrator complex is also involved in terminating the synthesis of non-coding Pol II transcripts, such as enhancer RNAs (eRNAs), small nuclear RNAs (snRNAs), telomerase RNAs and long non-coding RNAs (lncRNAs). In Dictyostelium discoideum (Social amoeba), this protein is Integrator complex subunit 7 homolog (ints7).